We begin with the raw amino-acid sequence, 319 residues long: MDFKDYYKILGVEPTADEKAIKAAYRKLARKYHPDVSKERDAEEKFKEANEAYEVLGDAQKRAEFDEIRKYGGQHGRPFQAPPGWESRGGGGGFEGGDFSDFFSSIFGGRSAGGNPFGGARQQQRSAGRRGQDVELELAVFLEETLSKESKQISFQVPQTNAMGQRTGFTTKTLNVRIPAGVTDGERIRLKGQGAPGSGGGANGDLFLTIRMAPHPLFDVEGHDLIITVPLAPWEAALGAKVAVPTLDGKINLTIRPDSQSGQRLRVPGKGLVNKQGARGNLYAQLKVVMPPASDESARELWTKLSEKAAFNPRTQWSK.

Residues 5 to 69 (DYYKILGVEP…QKRAEFDEIR (65 aa)) enclose the J domain.

It localises to the cytoplasm. Its subcellular location is the nucleoid. DNA-binding protein that preferentially recognizes a curved DNA sequence. It is probably a functional analog of DnaJ; displays overlapping activities with DnaJ, but functions under different conditions, probably acting as a molecular chaperone in an adaptive response to environmental stresses other than heat shock. Lacks autonomous chaperone activity; binds native substrates and targets them for recognition by DnaK. Its activity is inhibited by the binding of CbpM. The sequence is that of Curved DNA-binding protein from Pseudomonas putida (strain ATCC 700007 / DSM 6899 / JCM 31910 / BCRC 17059 / LMG 24140 / F1).